A 432-amino-acid chain; its full sequence is MSDIACIEAREIIDSRGNPTVEVDVSLSDGSFGRACVPSGASTGEFEALEMRDGDKERYNGKGVLKAVGTVNTLIADTLEGMDALNQGEIDHAMRNLDGTDNKSKLGANAMLGVSMACARAAADFLGVPLYRYLGGVHTFRMPVPMANIINGGKHSDNKIDFQEFMVMPIGAASMREAVRMTAEVFHALKGLLAADGKATSVGDEGGFAPDLDNEQALEYIMKAIAKAGLAPRKDVCIALDCASSELFDEGDRRGYKFWKSNPGKLFTAQEMIDLYKKWIATYPIVSIEDPLDQNDWAGYVQLTKELGDKVQIVGDDFFVTNTGRLARGIKEGSCNSILIKLNQIGTVTETVDAVRMAQNAGYAAVISHRSGETEDAFIADLAVALETGQIKTGSMSRSDRVAKYNQLMRIEEELGAQARYYGAKTFERFGC.

Residue Gln163 participates in (2R)-2-phosphoglycerate binding. Glu205 (proton donor) is an active-site residue. Residues Asp241, Glu289, and Asp316 each coordinate Mg(2+). Residues Lys341, Arg370, Ser371, and Lys392 each coordinate (2R)-2-phosphoglycerate. Lys341 acts as the Proton acceptor in catalysis.

It belongs to the enolase family. Mg(2+) serves as cofactor.

It is found in the cytoplasm. It localises to the secreted. Its subcellular location is the cell surface. It carries out the reaction (2R)-2-phosphoglycerate = phosphoenolpyruvate + H2O. Its pathway is carbohydrate degradation; glycolysis; pyruvate from D-glyceraldehyde 3-phosphate: step 4/5. Its function is as follows. Catalyzes the reversible conversion of 2-phosphoglycerate (2-PG) into phosphoenolpyruvate (PEP). It is essential for the degradation of carbohydrates via glycolysis. This chain is Enolase, found in Treponema pallidum (strain Nichols).